The sequence spans 153 residues: Aspartate carbamoyltransferase regulatory chain (153 aa).

4 residues coordinate Zn(2+): Cys109, Cys114, Cys138, and Cys141.

The protein belongs to the PyrI family. As to quaternary structure, contains catalytic and regulatory chains. Zn(2+) serves as cofactor.

Its function is as follows. Involved in allosteric regulation of aspartate carbamoyltransferase. The chain is Aspartate carbamoyltransferase regulatory chain from Escherichia coli (strain ATCC 8739 / DSM 1576 / NBRC 3972 / NCIMB 8545 / WDCM 00012 / Crooks).